Reading from the N-terminus, the 126-residue chain is Large ribosomal subunit protein uL22 (126 aa).

Belongs to the universal ribosomal protein uL22 family. Part of the 50S ribosomal subunit.

This protein binds specifically to 23S rRNA; its binding is stimulated by other ribosomal proteins, e.g. L4, L17, and L20. It is important during the early stages of 50S assembly. It makes multiple contacts with different domains of the 23S rRNA in the assembled 50S subunit and ribosome. Its function is as follows. The globular domain of the protein is located near the polypeptide exit tunnel on the outside of the subunit, while an extended beta-hairpin is found that lines the wall of the exit tunnel in the center of the 70S ribosome. The sequence is that of Large ribosomal subunit protein uL22 from Jannaschia sp. (strain CCS1).